The chain runs to 300 residues: Formate dehydrogenase-O iron-sulfur subunit (300 aa).

Residues 1 to 260 (MAYQSQDIIR…KFWKGIWKPL (260 aa)) are Cytoplasmic-facing. 4Fe-4S ferredoxin-type domains follow at residues 30–60 (VAKLIDVTTCIGCKACQVACSEWNDIRDTVG), 91–123 (LEWLIRKDGCMHCSDPGCLKACPAEGAIIQYAN), 124–153 (GIVDFQSEQCIGCGYCIAGCPFDIPRLNPE), and 158–189 (YKCTLCVDRVVVGQEPACVKTCPTGAIHFGTK). [4Fe-4S] cluster-binding residues include C39, C42, C45, C49, C100, C103, C108, C112, C133, C136, C139, C143, C160, C163, C175, and C179. Residues 261–279 (AAVGFAATFAASIFHYVGV) form a helical membrane-spanning segment. Residues 280-300 (GPNRADEEENNLHEEKDEERK) are Periplasmic-facing.

In terms of assembly, formate dehydrogenase is a membrane-bound complex, formed by subunits alpha, beta and gamma. Requires [4Fe-4S] cluster as cofactor.

The protein localises to the cell membrane. In terms of biological role, allows to use formate as major electron donor during aerobic respiration. The beta chain is an electron transfer unit containing 4 cysteine clusters involved in the formation of iron-sulfur centers. Electrons are transferred from the gamma chain to the molybdenum cofactor of the alpha subunit. This chain is Formate dehydrogenase-O iron-sulfur subunit (fdoH), found in Escherichia coli (strain K12).